The sequence spans 979 residues: MGKSDHLKLFGKKSGGKDARSPETRSRNSRSSTDNRSSIGNNGSDNPLARLSDLDLEEGVDDDADFDWDTLPLPPSDAQSLDNPFNSGEALPSFRRRGGPTSNDAIERDAVDTIRDTSGAYEEPDSASDGEDVGMNDEYQRKRERLVDVNDSASEVSSPRRESREGKNVRFHTETDDINPEDPIAAPAANTEAGTGTNENGEASSSGMKSSINVDDEEGSETSSSNNENKLDHFKKFFRRGSVQNKPDGGEDGAEKGMKSMKDDDNDDEKEGGGGFFSKVIQNIKDANNGLAPGLRNVNLHPEADPEKNSVQEAEVDGDDIQLVDFNSVAKGLVKNYSSLPQSAHHQKEPAILEGDTMYSPSTPSSSPGPESFVAAPMDDYDFDQVDSDGEDSDLDPFVGAQTYVPPPQRVRGGVLGSLLKMYQNEDVSDSFSTASSIGEEPAKPSKPLLDPHFSKGKIPTAGSLLHVPSSAASHLKKNAQQLAGGAHNLATKHYPGRKNEEASGSNSELPSFKNTRPKKNKKHLPKFKKKMAAEAKITVHIADLLQRHRFILRMCKGLMMYGAPTHRLEEYMIMTSRVLEIDGQFLYLPGCMIVSFGDATTRTSEVQLVRCAQGLNLWKLHQVHSIYKQVVHDTMSASEGNILMDKVLQDRNLVPSWVCVLLYGFCSAMVTPYAFGGDWVNLAVSFFIGTCVGALQFIVSARSNMYSNVFEISASIVVSFVGRAFGSIGGSKICFGAVTQGSLALILPGYIILCGALELQSRNLVAGSVRMFYAIIYSLFLSFGITLGAALFGWMYKNATNETNCPYPISPWYRFLFVPAFTIGISLINQAHWIQLPVMVTISCTGYVVTYYSGKHFKNSTEFTASLAAFVIGIMGNLYSRVWKGLAVSAMLPAIFVQVPSGVASQSSLLSGLQSANELIKTNSTKGGDAMPGASDLSGSLSFGITMIQVSIGITVGLFGSSLIVYPFGKKSTGLFSL.

5 disordered regions span residues 1–279 (MGKS…FFSK), 295–318 (LRNVNLHPEADPEKNSVQEAEVDG), 337–411 (YSSL…PQRV), 432–451 (FSTASSIGEEPAKPSKPLLD), and 491–528 (ATKHYPGRKNEEASGSNSELPSFKNTRPKKNKKHLPKF). The span at 15 to 26 (GGKDARSPETRS) shows a compositional bias: basic and acidic residues. The span at 29-38 (SRSSTDNRSS) shows a compositional bias: low complexity. The segment covering 54-68 (LDLEEGVDDDADFDW) has biased composition (acidic residues). Over residues 77–86 (DAQSLDNPFN) the composition is skewed to polar residues. Over residues 105–115 (AIERDAVDTIR) the composition is skewed to basic and acidic residues. Over residues 122 to 135 (EEPDSASDGEDVGM) the composition is skewed to acidic residues. 2 stretches are compositionally biased toward basic and acidic residues: residues 138 to 148 (EYQRKRERLVD) and 158 to 175 (SPRRESREGKNVRFHTET). Over residues 192-213 (EAGTGTNENGEASSSGMKSSIN) the composition is skewed to polar residues. Residues 253–263 (GAEKGMKSMKD) are compositionally biased toward basic and acidic residues. Over residues 360 to 372 (SPSTPSSSPGPES) the composition is skewed to low complexity. Residues 379 to 395 (DDYDFDQVDSDGEDSDL) show a composition bias toward acidic residues. The span at 503 to 515 (ASGSNSELPSFKN) shows a compositional bias: polar residues. Basic residues predominate over residues 516–528 (TRPKKNKKHLPKF). The next 10 helical transmembrane spans lie at 658–678 (WVCVLLYGFCSAMVTPYAFGG), 680–700 (WVNLAVSFFIGTCVGALQFIV), 710–730 (VFEISASIVVSFVGRAFGSIG), 734–754 (ICFGAVTQGSLALILPGYIIL), 773–793 (FYAIIYSLFLSFGITLGAALF), 809–829 (PISPWYRFLFVPAFTIGISLI), 832–852 (AHWIQLPVMVTISCTGYVVTY), 864–884 (FTASLAAFVIGIMGNLYSRVW), 886–906 (GLAVSAMLPAIFVQVPSGVAS), and 946–966 (ITMIQVSIGITVGLFGSSLIV).

It belongs to the ThrE exporter (TC 2.A.79) family.

It is found in the membrane. In Zygosaccharomyces rouxii (strain ATCC 2623 / CBS 732 / NBRC 1130 / NCYC 568 / NRRL Y-229), this protein is Pheromone-regulated membrane protein 10.